A 280-amino-acid polypeptide reads, in one-letter code: Nucleotide-binding protein Swoo_4243 (280 aa).

8 to 15 is an ATP binding site; it reads GRSGSGKS. 56–59 is a binding site for GTP; that stretch reads DVRN.

Belongs to the RapZ-like family.

Functionally, displays ATPase and GTPase activities. This Shewanella woodyi (strain ATCC 51908 / MS32) protein is Nucleotide-binding protein Swoo_4243.